Reading from the N-terminus, the 465-residue chain is Phospholipase A1-II 5 (465 aa).

The active-site Acyl-ester intermediate is serine 233. Catalysis depends on charge relay system residues serine 233, aspartate 297, and histidine 336.

Belongs to the AB hydrolase superfamily. Lipase family.

The protein localises to the cytoplasm. Acylhydrolase that catalyzes the hydrolysis of phospholipids at the sn-1 position. This Oryza sativa subsp. indica (Rice) protein is Phospholipase A1-II 5.